Reading from the N-terminus, the 158-residue chain is uncharacterized protein (158 aa).

This is an uncharacterized protein from Mycobacterium tuberculosis (strain CDC 1551 / Oshkosh).